The chain runs to 61 residues: MGRRRGVMSDEFKYELAKDLGFYDTVKNGGWGEIRARDAGNMVKRAIEIAEQQMAQNQNNR.

This sequence belongs to the alpha/beta-type SASP family.

May play some important role in either sporulation or the dormant spore. In Bacillus subtilis (strain 168), this protein is Protein SspF (sspF).